Here is a 528-residue protein sequence, read N- to C-terminus: Glucose transporter 1E (528 aa).

Positions 1–22 are disordered; sequence MTERRDNVSHAPDAIEGPNDGA. The Cytoplasmic segment spans residues 1–43; it reads MTERRDNVSHAPDAIEGPNDGAHAEETSPGFFSFENLGVAQVQ. A helical membrane pass occupies residues 44–64; sequence VVGGTLNGYVIGYVAVYLLLY. Residues 65–118 are Extracellular-facing; sequence LTATECKFTTEGACGGRKIYGCKWSGTTCKFENPKCSEGSDPSDSCKNEVAYTS. Residues 119–139 traverse the membrane as a helical segment; the sequence is VYSGIFACAMIVGSMVGSIIA. Over 140-151 the chain is Cytoplasmic; that stretch reads GKCITTFGLKKS. The chain crosses the membrane as a helical span at residues 152-172; the sequence is FIIVSITCTIACVVVQVAIEY. Residues 173–175 are Extracellular-facing; sequence NNY. A helical membrane pass occupies residues 176–196; it reads YALCTGRVLIGLGVGILCSVF. Topologically, residues 197 to 213 are cytoplasmic; the sequence is PMYVNENAHPKLCKMDG. A helical membrane pass occupies residues 214 to 234; sequence VLFQVFTTLGIMLAAMLGLIL. The Extracellular portion of the chain corresponds to 235–250; it reads DKTGASKEEANMAGRL. Residues 251 to 271 form a helical membrane-spanning segment; sequence HVFSAVPLGLSVAMFLVGMFL. The Cytoplasmic segment spans residues 272–301; that stretch reads RESTATFAQDDDGKADGGMDPNEYGWGQML. A helical membrane pass occupies residues 302–322; sequence WPLFMGAVTAGTLQLTGINAV. Over 323-338 the chain is Extracellular; sequence MNYAPKITENLGMDPS. Residues 339-359 traverse the membrane as a helical segment; sequence LGNFLVMAWNFVTSLVAIPLA. At 360–367 the chain is on the cytoplasmic side; that stretch reads SRFTMRQM. The chain crosses the membrane as a helical span at residues 368 to 388; that stretch reads FITCSFVASCMCLFLCGIPVF. Residues 389–403 lie on the Extracellular side of the membrane; it reads PGVAEEKVKNGVATT. The helical transmembrane segment at 404–424 threads the bilayer; sequence GIALFIAAFEFGVGSCFFVLA. Topologically, residues 425–438 are cytoplasmic; that stretch reads QDLFPPSFRPKGSS. Residues 439–459 form a helical membrane-spanning segment; it reads FVVMMQFIFNILINLLYPITT. Residues 460–475 are Extracellular-facing; that stretch reads EAISGGATGDQDKGQA. Residues 476 to 496 traverse the membrane as a helical segment; it reads VVFILFGLIGLICFVLQFFYL. Over 497-528 the chain is Cytoplasmic; that stretch reads YPYDANQDHENDHGTEPVERILSPVDVPTPRN. Residues 507-528 form a disordered region; sequence NDHGTEPVERILSPVDVPTPRN.

Belongs to the major facilitator superfamily. Sugar transporter (TC 2.A.1.1) family.

It localises to the membrane. Functionally, facilitative glucose transporter. The chain is Glucose transporter 1E (THT1E) from Trypanosoma brucei brucei.